The primary structure comprises 627 residues: MEDRQTRLFLALILSMGIWMGVNYFFFPNTSTKKNTETKQTQSDKTSENTKQQITSGKTKESNSADPVVQKEKITPFDTKKSFIVTDSYIVEFSSLGGKISKFYMKDFTGPNGELIQVARKNPETVVVDGKSYQAVELSRDKGFDFNFSDSLVEISDSPWNYIQFSLTEDKINHSISFSAVSPDRSYQLKKEFRFYPSENYFKLSISIINFSKEKLSFASQKNVRYLRTFGSLGPYPKDRPLSDRDTANFFRFYYLGGSFQDTLDGSSSVGFWSSVGNFFTGNSGTDESFSIKTDKESGVDFAGTGSRYFIAVADPLDHKPHGIVLDNRPKNESGAVLVYDNILLNPGENYNLDFASYIGIRESEGMAFKNPELDPSQSKNSPFVGLSSDLNKSFNQGITTPFRNGIIWILKQIYRFTIPNYGWSIIIFAILFKLVFYPLNQKQADSMKKMQELSPQLKTINEKFANDPKMRQQKTMELYKKNNVNPVGGCLPMVIQIPIFIALYTAFSDTIDLWNSPFLWVKDLSEPDVIWTSPAIPYFTQTGIGLNLLALLMVGTQVFQTRMTSVSMDPNQKMLMYVMPVMMLYIFWNMPSGVTLYWTFQNVLSIGQQWITNHLKKTEEKKKAKV.

The chain crosses the membrane as a helical span at residues 8-28 (LFLALILSMGIWMGVNYFFFP). A compositionally biased stretch (polar residues) spans 33 to 57 (KKNTETKQTQSDKTSENTKQQITSG). Residues 33 to 68 (KKNTETKQTQSDKTSENTKQQITSGKTKESNSADPV) are disordered. Residues 58 to 68 (KTKESNSADPV) show a composition bias toward basic and acidic residues. A run of 4 helical transmembrane segments spans residues 417-437 (FTIP…KLVF), 488-508 (VGGC…YTAF), 536-556 (AIPY…LMVG), and 575-595 (MLMY…PSGV).

The protein belongs to the OXA1/ALB3/YidC family. Type 1 subfamily. Interacts with the Sec translocase complex via SecD. Specifically interacts with transmembrane segments of nascent integral membrane proteins during membrane integration.

The protein localises to the cell inner membrane. Required for the insertion and/or proper folding and/or complex formation of integral membrane proteins into the membrane. Involved in integration of membrane proteins that insert both dependently and independently of the Sec translocase complex, as well as at least some lipoproteins. Aids folding of multispanning membrane proteins. The protein is Membrane protein insertase YidC of Leptospira interrogans serogroup Icterohaemorrhagiae serovar Lai (strain 56601).